We begin with the raw amino-acid sequence, 463 residues long: Adenosylhomocysteinase (463 aa).

Thr54, Asp128, and Glu189 together coordinate substrate. Position 190–192 (190–192 (TTT)) interacts with NAD(+). Positions 219 and 223 each coordinate substrate. NAD(+) is bound by residues Asn224, 253 to 258 (GYGDVG), Glu276, Asn311, 332 to 334 (IGH), and Asn377.

It belongs to the adenosylhomocysteinase family. Homotetramer. NAD(+) serves as cofactor.

The protein resides in the cytoplasm. It carries out the reaction S-adenosyl-L-homocysteine + H2O = L-homocysteine + adenosine. Its pathway is amino-acid biosynthesis; L-homocysteine biosynthesis; L-homocysteine from S-adenosyl-L-homocysteine: step 1/1. Functionally, may play a key role in the regulation of the intracellular concentration of adenosylhomocysteine. The protein is Adenosylhomocysteinase of Rhodobacter capsulatus (strain ATCC BAA-309 / NBRC 16581 / SB1003).